The primary structure comprises 393 residues: Chalcone synthase LF2 (393 aa).

Cysteine 164 is a catalytic residue.

This sequence belongs to the thiolase-like superfamily. Chalcone/stilbene synthases family.

It carries out the reaction (E)-4-coumaroyl-CoA + 3 malonyl-CoA + 3 H(+) = 2',4,4',6'-tetrahydroxychalcone + 3 CO2 + 4 CoA. The protein operates within secondary metabolite biosynthesis; flavonoid biosynthesis. In terms of biological role, the primary product of this enzyme is 4,2',4',6'-tetrahydroxychalcone (also termed naringenin-chalcone or chalcone) which can under specific conditions spontaneously isomerize into naringenin. This is Chalcone synthase LF2 (CHS-LF2) from Ipomoea batatas (Sweet potato).